The sequence spans 1032 residues: Toll-like receptor 9 (1032 aa).

Residues 1 to 25 form the signal peptide; sequence MGPCRGALHPLSLLVQAAALALALA. Over 26–815 the chain is Extracellular; sequence QGTLPAFLPC…QDLRLCLDEA (790 aa). An intrachain disulfide couples C35 to C45. 47–51 provides a ligand contact to DNA; the sequence is WLFLK. LRR repeat units lie at residues 62–85, 87–110, 122–147, 150–166, 167–190, 198–221, 223–242, 243–268, 283–306, 308–332, 333–356, 363–386, 390–413, 415–440, 472–496, 498–521, 522–545, 547–574, 576–600, 602–624, 629–652, 654–677, 678–701, 703–725, 726–749, and 751–774; these read RGNV…DFVH, VHLR…HFPC, VPTL…SLVS, LSRT…LAGL, YALR…ALQV, LGNL…LPPS, EYLL…DLAN, LTAL…CREC, LSHL…WFHG, GNLM…AFYG, LARL…HLHL, LLSL…TLQS, LPML…IFGA, PGLR…TGEV, CRTL…MFVR, ARLQ…QFVP, LSNL…SFTE, PRLE…SFVA, LPAL…LRSA, LRAL…LYLR, LRSL…NLDN, PKSL…SLAL, LPKL…SLPN, TQLQ…FFAL, AVRL…WFGS, and AGAL…TFVD. N64 carries an N-linked (GlcNAc...) asparagine glycan. DNA is bound by residues 72–77 and 95–109; these read SNRIHH and KWNC…MHFP. The cysteines at positions 98 and 110 are disulfide-linked. The N-linked (GlcNAc...) asparagine glycan is linked to N129. DNA is bound by residues Y132, R152, and 179 to 181; that span reads YYK. C178 and C184 are oxidised to a cystine. N200 is a glycosylation site (N-linked (GlcNAc...) asparagine). Y208 is a DNA binding site. 2 N-linked (GlcNAc...) asparagine glycosylation sites follow: N210 and N242. Intrachain disulfides connect C255–C268 and C258–C265. C258 carries the S-palmitoyl cysteine lipid modification. R262 lines the DNA pocket. The S-palmitoyl cysteine moiety is linked to residue C265. N340 is a glycosylation site (N-linked (GlcNAc...) asparagine). An intrachain disulfide couples C472 to C502. N-linked (GlcNAc...) asparagine glycans are attached at residues N476 and N515. N569 carries an N-linked (GlcNAc...) asparagine glycan. 3 N-linked (GlcNAc...) asparagine glycosylation sites follow: N671, N696, and N701. The N-linked (GlcNAc...) asparagine glycan is linked to N733. Disulfide bonds link C766-C792 and C768-C811. A helical transmembrane segment spans residues 816 to 836; that stretch reads LSWVCFSLSLLAVALSLAVPM. Residues 837–1032 are Cytoplasmic-facing; it reads LHQLCGWDLW…QNFCRGPTTA (196 aa). The TIR domain occupies 868 to 1013; it reads LAYDAFVVFD…SFWAQLGTAL (146 aa).

The protein belongs to the Toll-like receptor family. As to quaternary structure, monomer and homodimer. Exists as a monomer in the absence of unmethylated cytidine-phosphate-guanosine (CpG) ligand. Proteolytic processing of an insertion loop (Z-loop) is required for homodimerization upon binding to the unmethylated CpG ligand leading to its activation. Interacts with MYD88 via their respective TIR domains. Interacts with BTK. Interacts (via transmembrane domain) with UNC93B1. Interacts with CD300LH; the interaction may promote full activation of TLR9-triggered innate responses. Interacts with CNPY3 and HSP90B1; this interaction is required for proper folding in the endoplasmic reticulum. Interacts with SMPDL3B. Interacts with CD82; this interaction is essential for TLR9-dependent myddosome formation in response to CpG stimulation. Activated by proteolytic cleavage of the flexible loop between repeats LRR14 and LRR15 within the ectodomain. Cleavage requires UNC93B1. Proteolytically processed by first removing the majority of the ectodomain by either asparagine endopeptidase (AEP) or a cathepsin followed by a trimming event that is solely cathepsin mediated and required for optimal receptor signaling. Post-translationally, palmitoylated by ZDHHC3 in the Golgi regulates TLR9 trafficking from the Golgi to endosomes. Depalmitoylation by PPT1 controls the release of TLR9 from UNC93B1 in endosomes.

It is found in the endoplasmic reticulum membrane. It localises to the endosome. Its subcellular location is the lysosome. The protein localises to the cytoplasmic vesicle. The protein resides in the phagosome. Key component of innate and adaptive immunity. TLRs (Toll-like receptors) control host immune response against pathogens through recognition of molecular patterns specific to microorganisms. TLR9 is a nucleotide-sensing TLR which is activated by unmethylated cytidine-phosphate-guanosine (CpG) dinucleotides. Acts via MYD88 and TRAF6, leading to NF-kappa-B activation, cytokine secretion and the inflammatory response. Upon CpG stimulation, induces B-cell proliferation, activation, survival and antibody production. The sequence is that of Toll-like receptor 9 (TLR9) from Canis lupus familiaris (Dog).